The chain runs to 503 residues: Rhomboid-type serine protease 2 (503 aa).

Over residues 1–11 the composition is skewed to polar residues; it reads MAAQSYYNGAY. Residues 1–66 form a disordered region; it reads MAAQSYYNGA…SLRYSQQSIG (66 aa). At 1–136 the chain is on the cytoplasmic side; it reads MAAQSYYNGA…QKKKGFFQKK (136 aa). The chain crosses the membrane as a helical span at residues 137-157; that stretch reads IAYVTYILTIAQIIVFIVELV. At 158–253 the chain is on the extracellular side; sequence KMGQLTGSPI…DKPAPDQWFR (96 aa). Residues 254 to 274 form a helical membrane-spanning segment; sequence FIIPMFLHSGFVHIGFNLLVQ. Residues 275-283 lie on the Cytoplasmic side of the membrane; it reads MTMGADMER. The helical transmembrane segment at 284-304 threads the bilayer; it reads MIGWWRYGLVYLSSGIWGFVL. Residues 305–316 are Extracellular-facing; sequence GGNYAGQGEASC. The helical transmembrane segment at 317–337 threads the bilayer; it reads GCSGALFGILALFVLDLLYGW. S319 serves as the catalytic Nucleophile. The Cytoplasmic portion of the chain corresponds to 338 to 342; the sequence is NDRQN. The helical transmembrane segment at 343 to 363 threads the bilayer; that stretch reads PWVELIIMVLGIAVSFVLGLL. Over 364 to 365 the chain is Extracellular; sequence PG. A helical transmembrane segment spans residues 366–386; that stretch reads LDNFSHLGGFTMGLALGLCVM. H371 is an active-site residue. The Cytoplasmic portion of the chain corresponds to 387–449; sequence RSPNALRERI…FAGRKPLWWA (63 aa). Residues 450-470 form a helical membrane-spanning segment; sequence WWLVRLGALVAVLIGFILLIV. Topologically, residues 471-503 are extracellular; that stretch reads NFYKYPSSNCSWCYRFSCLPVNGWCDQGNLFSR.

This sequence belongs to the peptidase S54 family.

It localises to the membrane. It catalyses the reaction Cleaves type-1 transmembrane domains using a catalytic dyad composed of serine and histidine that are contributed by different transmembrane domains.. Probable rhomboid-type serine protease that catalyzes intramembrane proteolysis. This chain is Rhomboid-type serine protease 2, found in Emericella nidulans (strain FGSC A4 / ATCC 38163 / CBS 112.46 / NRRL 194 / M139) (Aspergillus nidulans).